We begin with the raw amino-acid sequence, 72 residues long: Variant surface glycoprotein MITAT 1.1000BC (72 aa).

The GPI-anchor amidated aspartate moiety is linked to residue Asp-50. The propeptide at 51–72 is removed in mature form; it reads GSFLVNKKFALMVYDFVSLLAF.

The protein localises to the cell membrane. In terms of biological role, VSG forms a coat on the surface of the parasite. The trypanosome evades the immune response of the host by expressing a series of antigenically distinct VSGs from an estimated 1000 VSG genes. The polypeptide is Variant surface glycoprotein MITAT 1.1000BC (Trypanosoma brucei brucei).